An 89-amino-acid polypeptide reads, in one-letter code: C-C motif chemokine 18 (89 aa).

The N-terminal stretch at 1–20 is a signal peptide; that stretch reads MKGLAAALLVLVCTMALCSC. Disulfide bonds link C30/C54 and C31/C70.

The protein belongs to the intercrine beta (chemokine CC) family. In terms of processing, the Cys-30/Cys-54 disulfide bond is required for activity. As to expression, expressed at high levels in lung, lymph nodes, placenta, bone marrow, dendritic cells present in germinal centers and T-cell areas of secondary lymphoid organs and macrophages derived from peripheral blood monocytes. Not expressed by peripheral blood monocytes and a monocyte-to-macrophage differentiation is a prerequisite for expression. Expressed in synovial fluids from patients with rheumatoid and septic arthritis and in ovarian carcinoma ascitic fluid.

It is found in the secreted. In terms of biological role, chemotactic factor that attracts lymphocytes but not monocytes or granulocytes. May be involved in B-cell migration into B-cell follicles in lymph nodes. Attracts naive T-lymphocytes toward dendritic cells and activated macrophages in lymph nodes, has chemotactic activity for naive T-cells, CD4+ and CD8+ T-cells and thus may play a role in both humoral and cell-mediated immunity responses. The chain is C-C motif chemokine 18 (CCL18) from Homo sapiens (Human).